The primary structure comprises 328 residues: Malate dehydrogenase (328 aa).

12–18 (GAAGQIG) contributes to the NAD(+) binding site. Residues Arg95 and Arg101 each coordinate substrate. NAD(+) contacts are provided by residues Asn108, Gln115, and 132-134 (VGN). Asn134 and Arg165 together coordinate substrate. The active-site Proton acceptor is the His190.

It belongs to the LDH/MDH superfamily. MDH type 2 family.

The enzyme catalyses (S)-malate + NAD(+) = oxaloacetate + NADH + H(+). Functionally, catalyzes the reversible oxidation of malate to oxaloacetate. The protein is Malate dehydrogenase of Variovorax paradoxus (strain S110).